Here is a 364-residue protein sequence, read N- to C-terminus: D-alanine--D-alanine ligase (364 aa).

Residues 134–344 (KVLLKSFNIP…YESLVDKLIT (211 aa)) enclose the ATP-grasp domain. 167–222 (NNKLNYPVIVKPSVLGSSIGINVAYNVSQIEKYIEEAFEYDLTVVVEKFIKAREIE) contacts ATP. Mg(2+)-binding residues include D297, E311, and N313.

It belongs to the D-alanine--D-alanine ligase family. Mg(2+) is required as a cofactor. Mn(2+) serves as cofactor.

The protein localises to the cytoplasm. The catalysed reaction is 2 D-alanine + ATP = D-alanyl-D-alanine + ADP + phosphate + H(+). It participates in cell wall biogenesis; peptidoglycan biosynthesis. In terms of biological role, cell wall formation. This is D-alanine--D-alanine ligase from Borrelia duttonii (strain Ly).